A 56-amino-acid polypeptide reads, in one-letter code: Small ribosomal subunit protein uS14z/uS14y/uS14x (56 aa).

Cys-21, Cys-24, Cys-39, and Cys-42 together coordinate Zn(2+).

Belongs to the universal ribosomal protein uS14 family. Zn(2+) serves as cofactor.

The protein is Small ribosomal subunit protein uS14z/uS14y/uS14x (RPS29A) of Arabidopsis thaliana (Mouse-ear cress).